Reading from the N-terminus, the 95-residue chain is Glutamine synthetase and cystathionine beta-lyase binding protein (95 aa).

In terms of assembly, interacts with glutamine synthetase (TTHA1329) and cystathionine beta-lyase (TTHA1620), but proteins do not form a ternary complex.

Functionally, binds to glutamine synthetase and cystathionine beta-lyase. May be utilized for the efficient use of nitrogen in the global nitrogen regulation of T.thermophilus. This chain is Glutamine synthetase and cystathionine beta-lyase binding protein, found in Thermus thermophilus (strain ATCC 27634 / DSM 579 / HB8).